Here is an 81-residue protein sequence, read N- to C-terminus: Photosystem I iron-sulfur center (81 aa).

4Fe-4S ferredoxin-type domains follow at residues 2–31 (SHSVKIYDTCIGCTQCVRACPTDVLEMIPW) and 39–68 (IAPAPRTEDCVGCKRCESACPTDFLSVRVY). Residues Cys-11, Cys-14, Cys-17, Cys-21, Cys-48, Cys-51, Cys-54, and Cys-58 each coordinate [4Fe-4S] cluster.

In terms of assembly, the eukaryotic PSI reaction center is composed of at least 11 subunits. It depends on [4Fe-4S] cluster as a cofactor.

Its subcellular location is the plastid. It is found in the chloroplast thylakoid membrane. It carries out the reaction reduced [plastocyanin] + hnu + oxidized [2Fe-2S]-[ferredoxin] = oxidized [plastocyanin] + reduced [2Fe-2S]-[ferredoxin]. Apoprotein for the two 4Fe-4S centers FA and FB of photosystem I (PSI); essential for photochemical activity. FB is the terminal electron acceptor of PSI, donating electrons to ferredoxin. The C-terminus interacts with PsaA/B/D and helps assemble the protein into the PSI complex. Required for binding of PsaD and PsaE to PSI. PSI is a plastocyanin-ferredoxin oxidoreductase, converting photonic excitation into a charge separation, which transfers an electron from the donor P700 chlorophyll pair to the spectroscopically characterized acceptors A0, A1, FX, FA and FB in turn. This chain is Photosystem I iron-sulfur center, found in Drimys granadensis.